A 70-amino-acid chain; its full sequence is Small ribosomal subunit protein bS21 (70 aa).

Belongs to the bacterial ribosomal protein bS21 family.

The polypeptide is Small ribosomal subunit protein bS21 (Nitratiruptor sp. (strain SB155-2)).